The following is a 60-amino-acid chain: Large ribosomal subunit protein bL32 (60 aa).

Residues 1 to 19 (MGVPKRKTSKGRRDKRRAH) show a composition bias toward basic residues. The interval 1–20 (MGVPKRKTSKGRRDKRRAHL) is disordered.

Belongs to the bacterial ribosomal protein bL32 family.

In Syntrophobacter fumaroxidans (strain DSM 10017 / MPOB), this protein is Large ribosomal subunit protein bL32.